The following is a 958-amino-acid chain: Transportin MOS14 (958 aa).

An Importin N-terminal domain is found at 26–93 (ADRWLQNFQG…RQSLTTLLKK (68 aa)).

The protein belongs to the importin beta family. Interacts with RS2Z33, RSZ21, RS31A, SR34 and RAN1.

It localises to the nucleus. Functionally, functions as a nuclear import receptor for serine-arginine rich (SR) proteins. Regulates nuclear import of SR proteins that are required for proper splicing of the two resistance (R) genes SNC1 and RPS4, a crucial step for their functions in plant immunity. The sequence is that of Transportin MOS14 from Arabidopsis thaliana (Mouse-ear cress).